The following is a 553-amino-acid chain: Phosphoglucomutase (553 aa).

The disordered stretch occupies residues 1 to 25 (MQATIKRYPTSPISGQTLGTSGLRK). A compositionally biased stretch (polar residues) spans 11 to 20 (SPISGQTLGT). Residues T20, R24, 117 to 118 (SH), and K131 each bind substrate. The active-site Phosphoserine intermediate is S117. Position 117 (S117) interacts with Mg(2+). Residues D289, D291, and D293 each coordinate Mg(2+). Residues 293 to 294 (DR), T352, 371 to 373 (EES), K384, and R509 each bind substrate.

This sequence belongs to the phosphohexose mutase family. Mg(2+) serves as cofactor.

Its subcellular location is the cytoplasm. It carries out the reaction alpha-D-glucose 1-phosphate = alpha-D-glucose 6-phosphate. In terms of biological role, catalyzes the reversible conversion of glucose 1-phosphate into glucose 6-phosphate. This enzyme participates in both the breakdown and synthesis of glucose. The polypeptide is Phosphoglucomutase (Entamoeba histolytica (strain ATCC 30459 / HM-1:IMSS / ABRM)).